A 333-amino-acid chain; its full sequence is 5-formaminoimidazole-4-carboxamide-1-(beta)-D-ribofuranosyl 5'-monophosphate synthetase (333 aa).

2 residues coordinate 5-amino-1-(5-phospho-beta-D-ribosyl)imidazole-4-carboxamide: H10 and S74. The ATP-grasp domain maps to 95–324 (RNLFAWESNQ…ISREIRLALN (230 aa)). ATP-binding positions include 125 to 185 (VEDV…VPMY) and E207. N230 is a 5-amino-1-(5-phospho-beta-D-ribosyl)imidazole-4-carboxamide binding site. The Mg(2+) site is built by E269 and E282.

This sequence belongs to the phosphohexose mutase family. Mg(2+) serves as cofactor. Mn(2+) is required as a cofactor.

The catalysed reaction is 5-amino-1-(5-phospho-beta-D-ribosyl)imidazole-4-carboxamide + formate + ATP = 5-formamido-1-(5-phospho-D-ribosyl)imidazole-4-carboxamide + ADP + phosphate. The protein operates within purine metabolism; IMP biosynthesis via de novo pathway; 5-formamido-1-(5-phospho-D-ribosyl)imidazole-4-carboxamide from 5-amino-1-(5-phospho-D-ribosyl)imidazole-4-carboxamide (formate route): step 1/1. In terms of biological role, catalyzes the ATP- and formate-dependent formylation of 5-aminoimidazole-4-carboxamide-1-beta-d-ribofuranosyl 5'-monophosphate (AICAR) to 5-formaminoimidazole-4-carboxamide-1-beta-d-ribofuranosyl 5'-monophosphate (FAICAR) in the absence of folates. The protein is 5-formaminoimidazole-4-carboxamide-1-(beta)-D-ribofuranosyl 5'-monophosphate synthetase of Sulfolobus acidocaldarius (strain ATCC 33909 / DSM 639 / JCM 8929 / NBRC 15157 / NCIMB 11770).